The primary structure comprises 250 residues: MNVRRVESISAQLEEASSTGGFLYAQNNTKRSIKERLMKLLPCSAAKTSSPAIQNSVEDELEMATVRHRPEALELLEAQSKFTKKELQILYRGFKNECPSGVVNEETFKEIYSQFFPQGDSTTYAHFLFNAFDTDHNGAVSFEDFIKGLSILLRGTVQEKLNWAFNLYDINKDGYITKEEMLDIMKAIYDMMGKCTYPVLKEDAPRQHVETFFQKMDKNKDGVVTIDEFIESCQKDENIMRSMQLFENVI.

The KIS stretch occupies residues 2–44 (NVRRVESISAQLEEASSTGGFLYAQNNTKRSIKERLMKLLPCS). S17 and S56 each carry phosphoserine. The EF-hand 1; degenerate domain maps to 61–117 (LEMATVRHRPEALELLEAQSKFTKKELQILYRGFKNECPSGVVNEETFKEIYSQFFP). 3 consecutive EF-hand domains span residues 120–155 (DSTT…LLRG), 156–191 (TVQE…IYDM), and 204–239 (APRQ…DENI). Ca(2+) is bound by residues D133, D135, N137, D144, D169, N171, D173, Y175, E180, D217, N219, D221, and E228. The tract at residues 237-250 (ENIMRSMQLFENVI) is interaction with KCND2.

The protein belongs to the recoverin family. Component of heteromultimeric potassium channels. Identified in potassium channel complexes containing KCND1, KCND2, KCND3, KCNIP1, KCNIP2, KCNIP3, KCNIP4, DPP6 and DPP10. Interacts with the C-terminus of PSEN2 and probably PSEN1. Interacts with KCND2 and KCND3. In terms of tissue distribution, expressed in brain. Highly expressed by neurons in layers II-IV of cortex and in hippocampus, thalamus and the Purkinje cell layer of the cerebellum.

It is found in the cell membrane. It localises to the cytoplasm. The protein resides in the peroxisome. In terms of biological role, regulatory subunit of Kv4/D (Shal)-type voltage-gated rapidly inactivating A-type potassium channels, such as KCND2/Kv4.2 and KCND3/Kv4.3. Modulates channel expression at the cell membrane, gating characteristics, inactivation kinetics and rate of recovery from inactivation in a calcium-dependent and isoform-specific manner. The sequence is that of Kv channel-interacting protein 4 (Kcnip4) from Mus musculus (Mouse).